We begin with the raw amino-acid sequence, 376 residues long: MAKNYDSVEFPYCDEVSKYERLAKIGQGTFGEVFKAKHRQTGKKVALKKVLMENEKEGFPITALREIKILQLLKHENVVNLIEICRTKISPTANQYNRCKGTIFLVFDFCEHDLAGLLSNAHVKFTLSEIKKVMQMLLNGLYYIHRNKILHRDMKAANVLITRDGVLKLADFGLARAFSLAKNSQPNKYTNRVVTLWYRPPELLLGERDYGPPIDLWGAGCIMAEMWTRSPIMQGNTEQHQLTLISQLCGSITPEVWPNVDKYELYQKLELPKGQKRKVKERLKAYVKDLYALDLIDKLLVLDPAQRIDSDDALNHDFFWSDPMPSDLKNMLSTHNQSMFEYLAPPRRRGGHMPQQPANQARNPAATNQSEFDRVF.

Residues 19 to 319 (YERLAKIGQG…SDDALNHDFF (301 aa)) form the Protein kinase domain. ATP-binding positions include 25–33 (IGQGTFGEV) and Lys48. Asp153 acts as the Proton acceptor in catalysis. Residues 345 to 376 (PPRRRGGHMPQQPANQARNPAATNQSEFDRVF) are disordered. A compositionally biased stretch (low complexity) spans 354–369 (PQQPANQARNPAATNQ).

Belongs to the protein kinase superfamily. CMGC Ser/Thr protein kinase family. CDC2/CDKX subfamily. In terms of assembly, associates with cyclin-T to form P-TEFb.

The protein localises to the nucleus. The enzyme catalyses L-seryl-[protein] + ATP = O-phospho-L-seryl-[protein] + ADP + H(+). The catalysed reaction is L-threonyl-[protein] + ATP = O-phospho-L-threonyl-[protein] + ADP + H(+). It carries out the reaction [DNA-directed RNA polymerase] + ATP = phospho-[DNA-directed RNA polymerase] + ADP + H(+). In terms of biological role, member of the cyclin-dependent kinase pair (CDK9/cyclin-T) complex, also called positive transcription elongation factor B (P-TEFb), which is proposed to facilitate the transition from abortive to production elongation by phosphorylating the CTD (C-terminal domain) of the large subunit of RNA polymerase II (RNAP II) and SUPT5H. This Xenopus tropicalis (Western clawed frog) protein is Cyclin-dependent kinase 9 (cdk9).